A 63-amino-acid chain; its full sequence is Large ribosomal subunit protein uL29 (63 aa).

The protein belongs to the universal ribosomal protein uL29 family.

In Photorhabdus laumondii subsp. laumondii (strain DSM 15139 / CIP 105565 / TT01) (Photorhabdus luminescens subsp. laumondii), this protein is Large ribosomal subunit protein uL29.